Reading from the N-terminus, the 538-residue chain is indole-2-monooxygenase (538 aa).

Residues 22–42 form a helical membrane-spanning segment; that stretch reads ALLLAIPFSLLLLPLLLRYLA. Cys-481 lines the heme pocket.

It belongs to the cytochrome P450 family. The cofactor is heme.

The protein resides in the membrane. It carries out the reaction indole + reduced [NADPH--hemoprotein reductase] + O2 = indolin-2-one + oxidized [NADPH--hemoprotein reductase] + H2O + H(+). Its pathway is secondary metabolite biosynthesis; 2,4-dihydroxy-1,4-benzoxazin-3-one biosynthesis; 2,4-dihydroxy-1,4-benzoxazin-3-one from indoleglycerol phosphate: step 2/5. In terms of biological role, catalyzes the conversion of indole to indolin-2-one. The chain is indole-2-monooxygenase (CYP71C4) from Zea mays (Maize).